A 31-amino-acid polypeptide reads, in one-letter code: Cytochrome b6-f complex subunit 6 (31 aa).

The helical transmembrane segment at 4-26 threads the bilayer; the sequence is ITSYFGFLLAALTVTSALFIGLS.

It belongs to the PetL family. The 4 large subunits of the cytochrome b6-f complex are cytochrome b6, subunit IV (17 kDa polypeptide, PetD), cytochrome f and the Rieske protein, while the 4 small subunits are PetG, PetL, PetM and PetN. The complex functions as a dimer.

The protein resides in the plastid. It is found in the chloroplast thylakoid membrane. Functionally, component of the cytochrome b6-f complex, which mediates electron transfer between photosystem II (PSII) and photosystem I (PSI), cyclic electron flow around PSI, and state transitions. PetL is important for photoautotrophic growth as well as for electron transfer efficiency and stability of the cytochrome b6-f complex. In Daucus carota (Wild carrot), this protein is Cytochrome b6-f complex subunit 6.